We begin with the raw amino-acid sequence, 389 residues long: Lipid-A-disaccharide synthase (389 aa).

It belongs to the LpxB family.

It carries out the reaction a lipid X + a UDP-2-N,3-O-bis[(3R)-3-hydroxyacyl]-alpha-D-glucosamine = a lipid A disaccharide + UDP + H(+). Its pathway is bacterial outer membrane biogenesis; LPS lipid A biosynthesis. Condensation of UDP-2,3-diacylglucosamine and 2,3-diacylglucosamine-1-phosphate to form lipid A disaccharide, a precursor of lipid A, a phosphorylated glycolipid that anchors the lipopolysaccharide to the outer membrane of the cell. This Burkholderia lata (strain ATCC 17760 / DSM 23089 / LMG 22485 / NCIMB 9086 / R18194 / 383) protein is Lipid-A-disaccharide synthase.